We begin with the raw amino-acid sequence, 399 residues long: Protein DDI1 homolog 2 (399 aa).

The region spanning 1–81 (MLLTVYCVRR…VILRQKENAD (81 aa)) is the Ubiquitin-like domain. The disordered stretch occupies residues 99–134 (IAVPGTSSPRQRQPPGTQQSHSSPGEITSSPQGLDN). The span at 103 to 131 (GTSSPRQRQPPGTQQSHSSPGEITSSPQG) shows a compositional bias: polar residues. The residue at position 104 (Thr104) is a Phosphothreonine. Ser106, Ser121, Ser128, Ser150, and Ser194 each carry phosphoserine. Residue Asp252 is part of the active site. The Ubiquitin-binding motif lies at 376–395 (EEIADQELAEALQKSAEDAE).

The protein belongs to the DDI1 family. In terms of assembly, homodimer. Interacts with MCM6; PCNA; PSMD4; PSMD8; RPA2 and RPN2. Interacts with RTF2.

It localises to the cytoplasm. The protein localises to the cytosol. It is found in the chromosome. In terms of biological role, aspartic protease that mediates the cleavage of NFE2L1/NRF1 at 'Leu-104', thereby promoting release of NFE2L1/NRF1 from the endoplasmic reticulum membrane. Ubiquitination of NFE2L1/NRF1 is a prerequisite for cleavage, suggesting that DDI2 specifically recognizes and binds ubiquitinated NFE2L1/NRF1. Seems to act as a proteasomal shuttle which links the proteasome and replication fork proteins like RTF2. Required, with DDI1, for cellular survival following replication stress. Together or redudantly with DDI1, removes RTF2 from stalled forks to allow cell cycle progression after replication stress and maintains genome integrity. In Homo sapiens (Human), this protein is Protein DDI1 homolog 2.